A 302-amino-acid chain; its full sequence is Eukaryotic translation initiation factor 3 subunit F (302 aa).

The MPN domain occupies 23–165 (IVIEPAVLFS…IKTYVSSPVG (143 aa)). At Ser-162 the chain carries Phosphoserine.

The protein belongs to the eIF-3 subunit F family. In terms of assembly, component of the eukaryotic translation initiation factor 3 (eIF-3) complex. The eIF-3 complex appears to include tif32/eif3a, SPAC25G10.08/eif3b, tif33/eif3c, SPBC4C3.07/eif3f, tif35/eif3g and sum1/eif3i. This set of common subunits may also associate exclusively with either moe1/eif3d and int6/eif3e, or with SPAC821.05/eif3h and SPAC1751.03/eif3m. The eIF-3 complex may also include SPAC3A12.13c/eif3j.

Its subcellular location is the cytoplasm. Its function is as follows. Component of the eukaryotic translation initiation factor 3 (eIF-3) complex, which is involved in protein synthesis of a specialized repertoire of mRNAs and, together with other initiation factors, stimulates binding of mRNA and methionyl-tRNAi to the 40S ribosome. The eIF-3 complex specifically targets and initiates translation of a subset of mRNAs involved in cell proliferation. The sequence is that of Eukaryotic translation initiation factor 3 subunit F from Schizosaccharomyces pombe (strain 972 / ATCC 24843) (Fission yeast).